The sequence spans 461 residues: Bifunctional protein GlmU (461 aa).

Residues Met1 to Arg243 are pyrophosphorylase. UDP-N-acetyl-alpha-D-glucosamine contacts are provided by residues Leu24–Gly27, Lys38, Gln86, Gly91–Thr92, Tyr112–Asp114, Gly155, Glu169, Asn184, and Asn241. A Mg(2+)-binding site is contributed by Asp114. Asn241 serves as a coordination point for Mg(2+). The linker stretch occupies residues Ala244 to Gly264. The segment at Gly265–Gly461 is N-acetyltransferase. The UDP-N-acetyl-alpha-D-glucosamine site is built by Arg330 and Lys348. The active-site Proton acceptor is the His360. UDP-N-acetyl-alpha-D-glucosamine contacts are provided by Tyr363 and Asn374. Acetyl-CoA contacts are provided by residues Ala377, Asn383–Tyr384, Ser402, Ala420, and Arg437.

It in the N-terminal section; belongs to the N-acetylglucosamine-1-phosphate uridyltransferase family. In the C-terminal section; belongs to the transferase hexapeptide repeat family. In terms of assembly, homotrimer. It depends on Mg(2+) as a cofactor.

It localises to the cytoplasm. It catalyses the reaction alpha-D-glucosamine 1-phosphate + acetyl-CoA = N-acetyl-alpha-D-glucosamine 1-phosphate + CoA + H(+). The catalysed reaction is N-acetyl-alpha-D-glucosamine 1-phosphate + UTP + H(+) = UDP-N-acetyl-alpha-D-glucosamine + diphosphate. The protein operates within nucleotide-sugar biosynthesis; UDP-N-acetyl-alpha-D-glucosamine biosynthesis; N-acetyl-alpha-D-glucosamine 1-phosphate from alpha-D-glucosamine 6-phosphate (route II): step 2/2. It participates in nucleotide-sugar biosynthesis; UDP-N-acetyl-alpha-D-glucosamine biosynthesis; UDP-N-acetyl-alpha-D-glucosamine from N-acetyl-alpha-D-glucosamine 1-phosphate: step 1/1. It functions in the pathway bacterial outer membrane biogenesis; LPS lipid A biosynthesis. Functionally, catalyzes the last two sequential reactions in the de novo biosynthetic pathway for UDP-N-acetylglucosamine (UDP-GlcNAc). The C-terminal domain catalyzes the transfer of acetyl group from acetyl coenzyme A to glucosamine-1-phosphate (GlcN-1-P) to produce N-acetylglucosamine-1-phosphate (GlcNAc-1-P), which is converted into UDP-GlcNAc by the transfer of uridine 5-monophosphate (from uridine 5-triphosphate), a reaction catalyzed by the N-terminal domain. This Gluconacetobacter diazotrophicus (strain ATCC 49037 / DSM 5601 / CCUG 37298 / CIP 103539 / LMG 7603 / PAl5) protein is Bifunctional protein GlmU.